The chain runs to 246 residues: Putative outer membrane protein YiaT (246 aa).

Positions 1-21 (MLINRNIVALFALPFMASATA) are cleaved as a signal peptide.

This sequence belongs to the MipA/OmpV family.

Its subcellular location is the cell outer membrane. The sequence is that of Putative outer membrane protein YiaT (yiaT) from Escherichia coli (strain K12).